Reading from the N-terminus, the 156-residue chain is Small ribosomal subunit protein uS7 (156 aa).

The protein belongs to the universal ribosomal protein uS7 family. In terms of assembly, part of the 30S ribosomal subunit. Contacts proteins S9 and S11.

In terms of biological role, one of the primary rRNA binding proteins, it binds directly to 16S rRNA where it nucleates assembly of the head domain of the 30S subunit. Is located at the subunit interface close to the decoding center, probably blocks exit of the E-site tRNA. This chain is Small ribosomal subunit protein uS7, found in Shewanella woodyi (strain ATCC 51908 / MS32).